The chain runs to 807 residues: Glycerol-3-phosphate acyltransferase (807 aa).

Residues 305–310 (CHRSHM) carry the HXXXXD motif motif.

Belongs to the GPAT/DAPAT family.

It is found in the cell inner membrane. The enzyme catalyses sn-glycerol 3-phosphate + an acyl-CoA = a 1-acyl-sn-glycero-3-phosphate + CoA. It participates in phospholipid metabolism; CDP-diacylglycerol biosynthesis; CDP-diacylglycerol from sn-glycerol 3-phosphate: step 1/3. In Klebsiella pneumoniae (strain 342), this protein is Glycerol-3-phosphate acyltransferase.